A 1481-amino-acid chain; its full sequence is Cystic fibrosis transmembrane conductance regulator (1481 aa).

Residues 1–77 are Cytoplasmic-facing; that stretch reads MQRSPLEKAS…KLINALRRCF (77 aa). Residues 78–98 form a helical membrane-spanning segment; it reads FWRFMFYGILLYLGEVTKAVQ. One can recognise an ABC transmembrane type-1 1 domain in the interval 81–365; that stretch reads FMFYGILLYL…WAVQTWYDSL (285 aa). Residues 99–122 are Extracellular-facing; sequence PLLLGRIIASYDPDNKEERSIAIY. Residues 123 to 146 form a helical membrane-spanning segment; it reads LGIGLCLLFIVRTLLLHPAIFGLH. Residues 147–195 lie on the Cytoplasmic side of the membrane; that stretch reads HIGMQMRIAMFSLIYKKTLKLSSRVLDKISIGQLVSLLSNNLNKFDEGL. The chain crosses the membrane as a helical span at residues 196–216; that stretch reads ALAHFVWIVPLQVALLMGLIW. Residues 217-222 are Extracellular-facing; it reads ELLQAS. A helical transmembrane segment spans residues 223–243; that stretch reads AFCGLGFLIVLALFQAGLGRM. Topologically, residues 244–298 are cytoplasmic; that stretch reads MMKYRDQRAGKINERLVITSEMIENIQSVKAYCWEEAMEKMIENLRQTELKLTRK. The chain crosses the membrane as a helical span at residues 299-319; the sequence is AAYVRYFNSSAFFFSGFFVVF. The Extracellular portion of the chain corresponds to 320–339; sequence LSVLPYALIKGIVLRKIFTT. A helical transmembrane segment spans residues 340–358; that stretch reads ISFCIVLRMAVTRQFPWAV. The Cytoplasmic segment spans residues 359–858; the sequence is QTWYDSLGAI…YLRYITVHKS (500 aa). Residues tryptophan 401, serine 434, 458–465, and glutamine 493 contribute to the ATP site; that span reads GSTGAGKT. The region spanning 423 to 646 is the ABC transporter 1 domain; it reads NDDDSLFFSN…RPDFSSKLMG (224 aa). A lipid anchor (S-palmitoyl cysteine) is attached at cysteine 524. Serine 549 and serine 660 each carry phosphoserine. The disordered R region stretch occupies residues 654 to 831; sequence SAERRNSILT…EEINEEDLKE (178 aa). At serine 670 the chain carries Phosphoserine; by PKA. Phosphoserine is present on serine 686. A Glycyl lysine isopeptide (Lys-Gly) (interchain with G-Cter in ubiquitin) cross-link involves residue lysine 688. Residues serine 700 and serine 712 each carry the phosphoserine modification. Threonine 717 is subject to Phosphothreonine. Serine 737, serine 753, serine 768, serine 790, serine 795, and serine 813 each carry phosphoserine. A helical transmembrane segment spans residues 859-879; that stretch reads LIFVLIWCLVIFLAEVAASLV. Residues 859 to 1155 enclose the ABC transmembrane type-1 2 domain; sequence LIFVLIWCLV…AVNSSIDVDS (297 aa). The Extracellular segment spans residues 880–918; the sequence is VLWFLGNTPPQDKGNSTYSRNNSYAVIITRTSSYYVFYI. Residues asparagine 894 and asparagine 900 are each glycosylated (N-linked (GlcNAc...) asparagine). A discontinuously helical transmembrane segment spans residues 919-939; it reads YVGVADTLLAMGFFRGLPLVH. Topologically, residues 940-990 are cytoplasmic; it reads TLITVSKILHHKMLHSVLQAPMSTLNTLKAGGILNRFSKDIAILDDLLPLT. The chain crosses the membrane as a helical span at residues 991-1011; sequence IFDFIQLLLIVIGAIAVVAVL. Topologically, residues 1012-1013 are extracellular; that stretch reads QP. A helical transmembrane segment spans residues 1014 to 1034; sequence YIFVATVPVIVAFIMLRAYFL. The Cytoplasmic portion of the chain corresponds to 1035 to 1095; sequence QTSQQLKQLE…TANWFLYLST (61 aa). A helical transmembrane segment spans residues 1096–1116; sequence LRWFQMRIEMIFVIFFIAVTF. Over 1117–1130 the chain is Extracellular; it reads ISILTTGEGEGTVG. The chain crosses the membrane as a helical span at residues 1131–1151; the sequence is IILTLAMNIMSTLQWAVNSSI. Residues 1152 to 1481 lie on the Cytoplasmic side of the membrane; that stretch reads DVDSLMRSVS…TEEEVQDTRL (330 aa). Residues 1211-1444 form the ABC transporter 2 domain; sequence MTVKDLTAKY…RSLFRQAISP (234 aa). Residues tyrosine 1220 and 1245-1252 each bind ATP; that span reads GRTGSGKS. Positions 1387–1481 are interaction with GORASP2; it reads RTLKQAFADC…TEEEVQDTRL (95 aa). Cysteine 1396 is lipidated: S-palmitoyl cysteine. 2 positions are modified to phosphoserine: serine 1445 and serine 1457. Residues 1462-1481 form a disordered region; sequence QPQIAALKEETEEEVQDTRL. The span at 1471-1481 shows a compositional bias: acidic residues; the sequence is ETEEEVQDTRL. The PDZ-binding signature appears at 1479–1481; the sequence is TRL.

The protein belongs to the ABC transporter superfamily. ABCC family. CFTR transporter (TC 3.A.1.202) subfamily. Monomer; does not require oligomerization for channel activity. May form oligomers in the membrane. Interacts with SLC26A3, SLC26A6 and NHERF1. Interacts with SHANK2. Interacts with MYO6. Interacts (via C-terminus) with GOPC (via PDZ domain); this promotes CFTR internalization and thereby decreases channel activity. Interacts with SLC4A7 through NHERF1. Found in a complex with MYO5B and RAB11A. Interacts with ANO1. Interacts with SLC26A8. Interacts with AHCYL1; the interaction increases CFTR activity. Interacts with CSE1L. The core-glycosylated form interacts with GORASP2 (via PDZ GRASP-type 1 domain) in respone to ER stress. Interacts with MARCHF2; the interaction leads to CFTR ubiqtuitination and degradation. Interacts with ADGRG2. Post-translationally, N-glycosylated. In terms of processing, phosphorylated; cAMP treatment promotes phosphorylation and activates the channel. Dephosphorylation decreases the ATPase activity (in vitro). Phosphorylation at PKA sites activates the channel. Phosphorylation at PKC sites enhances the response to phosphorylation by PKA. Phosphorylated by AMPK; this inhibits channel activity. Ubiquitinated, leading to its degradation in the lysosome. Deubiquitination by USP10 in early endosomes enhances its endocytic recycling to the cell membrane. Ubiquitinated by RNF185 during ER stress. Ubiquitinated by MARCHF2.

The protein localises to the apical cell membrane. It is found in the early endosome membrane. It localises to the cell membrane. The protein resides in the recycling endosome membrane. Its subcellular location is the endoplasmic reticulum membrane. The protein localises to the nucleus. It carries out the reaction ATP + H2O + closed Cl(-) channel = ADP + phosphate + open Cl(-) channel.. The catalysed reaction is chloride(in) = chloride(out). The enzyme catalyses hydrogencarbonate(in) = hydrogencarbonate(out). It catalyses the reaction ATP + H2O = ADP + phosphate + H(+). Epithelial ion channel that plays an important role in the regulation of epithelial ion and water transport and fluid homeostasis. Mediates the transport of chloride ions across the cell membrane. Possesses an intrinsic ATPase activity and utilizes ATP to gate its channel; the passive flow of anions through the channel is gated by cycles of ATP binding and hydrolysis by the ATP-binding domains. The ion channel is also permeable to HCO(3)(-); selectivity depends on the extracellular chloride concentration. Exerts its function also by modulating the activity of other ion channels and transporters. Contributes to the regulation of the pH and the ion content of the epithelial fluid layer. Modulates the activity of the epithelial sodium channel (ENaC) complex, in part by regulating the cell surface expression of the ENaC complex. May regulate bicarbonate secretion and salvage in epithelial cells by regulating the transporter SLC4A7. Can inhibit the chloride channel activity of ANO1. Plays a role in the chloride and bicarbonate homeostasis during sperm epididymal maturation and capacitation. In Papio anubis (Olive baboon), this protein is Cystic fibrosis transmembrane conductance regulator.